The following is a 190-amino-acid chain: TATA box-binding protein-like 1 (190 aa).

The protein belongs to the TBP family. As to quaternary structure, binds TFIIA and TFIIB.

Its subcellular location is the cytoplasm. The protein resides in the nucleus. Functionally, part of a specialized transcription system that mediates the transcription of most ribosomal proteins through the 5'-TCT-3' motif which is a core promoter element at these genes. Seems to also mediate the transcription of NF1. Does not bind the TATA box. The polypeptide is TATA box-binding protein-like 1 (TBPL1) (Pongo abelii (Sumatran orangutan)).